The primary structure comprises 294 residues: tRNA dimethylallyltransferase (294 aa).

ATP is bound at residue 10–17; the sequence is GPTAVGKT. Residue 12-17 coordinates substrate; the sequence is TAVGKT. The tract at residues 35 to 38 is interaction with substrate tRNA; that stretch reads DSQQ.

The protein belongs to the IPP transferase family. As to quaternary structure, monomer. The cofactor is Mg(2+).

It catalyses the reaction adenosine(37) in tRNA + dimethylallyl diphosphate = N(6)-dimethylallyladenosine(37) in tRNA + diphosphate. Catalyzes the transfer of a dimethylallyl group onto the adenine at position 37 in tRNAs that read codons beginning with uridine, leading to the formation of N6-(dimethylallyl)adenosine (i(6)A). This chain is tRNA dimethylallyltransferase, found in Streptococcus pneumoniae (strain Taiwan19F-14).